Consider the following 424-residue polypeptide: Na(+)/H(+) antiporter NhaA (424 aa).

11 consecutive transmembrane segments (helical) span residues 23 to 43, 65 to 85, 102 to 122, 131 to 151, 160 to 180, 183 to 203, 211 to 231, 265 to 285, 303 to 323, 341 to 361, and 373 to 393; these read ILLI…LATL, VHLW…GLEI, LPFI…MFFV, GWAI…ALLG, LFLV…IALF, AKIN…MFAC, LLVY…SGVH, ALHP…NAGV, IAAG…WLAV, AVSM…SLAF, and IGIL…LRLA.

It belongs to the NhaA Na(+)/H(+) (TC 2.A.33) antiporter family.

It localises to the cell inner membrane. It carries out the reaction Na(+)(in) + 2 H(+)(out) = Na(+)(out) + 2 H(+)(in). Na(+)/H(+) antiporter that extrudes sodium in exchange for external protons. This chain is Na(+)/H(+) antiporter NhaA, found in Sphingopyxis alaskensis (strain DSM 13593 / LMG 18877 / RB2256) (Sphingomonas alaskensis).